The sequence spans 301 residues: Ribosomal RNA small subunit methyltransferase A (301 aa).

The S-adenosyl-L-methionine site is built by Asn23, Ile25, Gly50, Glu72, Asp97, and Asn149.

It belongs to the class I-like SAM-binding methyltransferase superfamily. rRNA adenine N(6)-methyltransferase family. RsmA subfamily.

It localises to the cytoplasm. It carries out the reaction adenosine(1518)/adenosine(1519) in 16S rRNA + 4 S-adenosyl-L-methionine = N(6)-dimethyladenosine(1518)/N(6)-dimethyladenosine(1519) in 16S rRNA + 4 S-adenosyl-L-homocysteine + 4 H(+). Functionally, specifically dimethylates two adjacent adenosines (A1518 and A1519) in the loop of a conserved hairpin near the 3'-end of 16S rRNA in the 30S particle. May play a critical role in biogenesis of 30S subunits. The sequence is that of Ribosomal RNA small subunit methyltransferase A from Rickettsia conorii (strain ATCC VR-613 / Malish 7).